A 126-amino-acid chain; its full sequence is Fatty acid-binding protein, liver (126 aa).

An N-acetylalanine modification is found at alanine 2.

This sequence belongs to the calycin superfamily. Fatty-acid binding protein (FABP) family. In terms of tissue distribution, liver.

Its subcellular location is the cytoplasm. In terms of biological role, binds free fatty acids and their coenzyme A derivatives, bilirubin, and some other small molecules in the cytoplasm. May be involved in intracellular lipid transport this L-FABP binds only one fatty acid/molecule. Has more affinity for trans-parinaric acid than for cis-parinaric acid. The protein is Fatty acid-binding protein, liver (fabp1) of Rhamdia sapo (South American catfish).